Consider the following 517-residue polypeptide: Gamma-1-syntrophin (517 aa).

In terms of domain architecture, PDZ spans 57–140 (TVTIRRQTVG…EVTLTVSFLK (84 aa)). The PH domain maps to 283–390 (QIVYMGWCEA…WERAFQTATF (108 aa)).

The protein belongs to the syntrophin family. Interacts with the dystrophin protein DMD and related proteins DTNA and DTNB. Interacts with DGKZ.

The protein resides in the cytoplasm. Its subcellular location is the cytoskeleton. It is found in the nucleus. Its function is as follows. Adapter protein that binds to and probably organizes the subcellular localization of a variety of proteins. May link various receptors to the actin cytoskeleton and the dystrophin glycoprotein complex. May participate in regulating the subcellular location of diacylglycerol kinase-zeta to ensure that diacylglycerol is rapidly inactivated following receptor activation. In Mus musculus (Mouse), this protein is Gamma-1-syntrophin (Sntg1).